The sequence spans 132 residues: Phosphomevalonate dehydratase small subunit (132 aa).

Ser-61 functions as the Proton acceptor in the catalytic mechanism.

Belongs to the AcnX type II small subunit family. In terms of assembly, heterodimer composed of a large subunit (PMDh-L) and a small subunit (PMDh-S).

The enzyme catalyses (R)-5-phosphomevalonate = (2E)-3-methyl-5-phosphooxypent-2-enoate + H2O. Its pathway is isoprenoid biosynthesis; isopentenyl diphosphate biosynthesis via mevalonate pathway. In terms of biological role, component of a hydro-lyase that catalyzes the dehydration of mevalonate 5-phosphate (MVA5P) to form trans-anhydromevalonate 5-phosphate (tAHMP). Involved in the archaeal mevalonate (MVA) pathway, which provides fundamental precursors for isoprenoid biosynthesis, such as isopentenyl diphosphate (IPP) and dimethylallyl diphosphate (DMAPP). In Archaeoglobus fulgidus (strain ATCC 49558 / DSM 4304 / JCM 9628 / NBRC 100126 / VC-16), this protein is Phosphomevalonate dehydratase small subunit.